We begin with the raw amino-acid sequence, 204 residues long: Ras-related protein RABG1 (204 aa).

G12–T19 lines the GTP pocket. The Effector region motif lies at H34–L42. Residues D60–Q64, N122–D125, and S155–A156 each bind GTP. 2 S-geranylgeranyl cysteine lipidation sites follow: C202 and C204. A Cysteine methyl ester modification is found at C204.

Belongs to the small GTPase superfamily. Rab family.

It is found in the cell membrane. In terms of biological role, intracellular vesicle trafficking and protein transport. In Arabidopsis thaliana (Mouse-ear cress), this protein is Ras-related protein RABG1 (RABG1).